The primary structure comprises 251 residues: 3-deoxy-manno-octulosonate cytidylyltransferase (251 aa).

It belongs to the KdsB family.

It is found in the cytoplasm. The enzyme catalyses 3-deoxy-alpha-D-manno-oct-2-ulosonate + CTP = CMP-3-deoxy-beta-D-manno-octulosonate + diphosphate. It participates in nucleotide-sugar biosynthesis; CMP-3-deoxy-D-manno-octulosonate biosynthesis; CMP-3-deoxy-D-manno-octulosonate from 3-deoxy-D-manno-octulosonate and CTP: step 1/1. It functions in the pathway bacterial outer membrane biogenesis; lipopolysaccharide biosynthesis. In terms of biological role, activates KDO (a required 8-carbon sugar) for incorporation into bacterial lipopolysaccharide in Gram-negative bacteria. The protein is 3-deoxy-manno-octulosonate cytidylyltransferase of Vibrio parahaemolyticus serotype O3:K6 (strain RIMD 2210633).